The primary structure comprises 96 residues: Fruit-specific protein (96 aa).

3 disulfides stabilise this stretch: Cys-59–Cys-75, Cys-63–Cys-78, and Cys-69–Cys-92.

As to expression, fruit specific.

In Solanum lycopersicum (Tomato), this protein is Fruit-specific protein (2A11).